The primary structure comprises 160 residues: Transcriptional repressor NrdR (160 aa).

A zinc finger spans residues 3 to 34; the sequence is CPSCQNTDSRVLESRAADGGRSVRRRRECLNC. The ATP-cone domain occupies 49-139; it reads ITVIKRNGNR…VYRQFRGIDD (91 aa).

Belongs to the NrdR family. Zn(2+) is required as a cofactor.

Negatively regulates transcription of bacterial ribonucleotide reductase nrd genes and operons by binding to NrdR-boxes. This is Transcriptional repressor NrdR from Synechococcus sp. (strain CC9605).